Consider the following 219-residue polypeptide: Transmembrane protein 179B (219 aa).

Helical transmembrane passes span 9 to 29 (VELA…AAMT), 65 to 85 (FVAG…LFWI), 96 to 116 (GAIG…LVLV), and 167 to 187 (TSSW…VVQW). Residues 198 to 219 (ERGDPEWSSETDALVGSRLSHS) are disordered. Phosphoserine is present on residues Ser206 and Ser214.

Belongs to the TMEM179 family.

The protein resides in the membrane. This is Transmembrane protein 179B (TMEM179B) from Homo sapiens (Human).